The following is a 380-amino-acid chain: Cytochrome b (380 aa).

4 helical membrane passes run Phe-33 to Met-53, Trp-77 to Val-98, Trp-113 to Leu-133, and Phe-178 to Leu-198. His-83 and His-97 together coordinate heme b. Heme b-binding residues include His-182 and His-196. Position 201 (His-201) interacts with a ubiquinone. 4 helical membrane passes run Ile-226–Phe-246, Leu-288–His-308, Ile-320–Gly-340, and Phe-347–Pro-367.

It belongs to the cytochrome b family. The cytochrome bc1 complex contains 11 subunits: 3 respiratory subunits (MT-CYB, CYC1 and UQCRFS1), 2 core proteins (UQCRC1 and UQCRC2) and 6 low-molecular weight proteins (UQCRH/QCR6, UQCRB/QCR7, UQCRQ/QCR8, UQCR10/QCR9, UQCR11/QCR10 and a cleavage product of UQCRFS1). This cytochrome bc1 complex then forms a dimer. The cofactor is heme b.

The protein resides in the mitochondrion inner membrane. Its function is as follows. Component of the ubiquinol-cytochrome c reductase complex (complex III or cytochrome b-c1 complex) that is part of the mitochondrial respiratory chain. The b-c1 complex mediates electron transfer from ubiquinol to cytochrome c. Contributes to the generation of a proton gradient across the mitochondrial membrane that is then used for ATP synthesis. This is Cytochrome b (MT-CYB) from Synaptomys borealis (Northern bog lemming).